The primary structure comprises 1791 residues: 1-phosphatidylinositol-3-phosphate 5-kinase FAB1B (1791 aa).

Residues 39-105 form an FYVE-type zinc finger; sequence DQSCRVCYEC…VCNYCFRQWE (67 aa). Zn(2+)-binding residues include C45, C48, C61, C64, C69, C72, C97, and C100. Disordered regions lie at residues 166–186, 279–370, 770–790, and 834–859; these read HGVS…SRRS, EQFQ…DRTT, SDLS…NPIV, and QQNN…DHQS. The segment covering 279–293 has biased composition (basic and acidic residues); it reads EQFQKKSEHDGRDEC. The span at 324-345 shows a compositional bias: acidic residues; that stretch reads PENEEDERESALFDEEDNEGDA. A compositionally biased stretch (basic and acidic residues) spans 838–850; the sequence is EKPKETQSQKEEF. Residues 1077-1111 adopt a coiled-coil conformation; it reads EKGFRRRIGELEEVLQKEKAEFEENMQKILHREVN. The segment covering 1151 to 1164 has biased composition (basic and acidic residues); sequence NSDDTKREENEKPP. Positions 1151–1242 are disordered; that stretch reads NSDDTKREEN…DTSYPLENKV (92 aa). Polar residues-rich tracts occupy residues 1167–1188 and 1196–1206; these read KSQT…SEVN and TGDTGSLNNVQ. A PIPK domain is found at 1433–1758; that stretch reads SELNIPRPVD…RFRKAMTTYF (326 aa). Positions 1769–1791 are disordered; the sequence is NVVANNSKSDQPEETSQAGTQAE. The span at 1771–1791 shows a compositional bias: polar residues; the sequence is VANNSKSDQPEETSQAGTQAE.

As to quaternary structure, component of the PI(3,5)P2 regulatory complex at least composed of ATG18, SAC/FIG4, FAB1 and VAC14. Requires Mg(2+) as cofactor. Mn(2+) is required as a cofactor. Ubiquitous with highest expression levels in the root hair zone, pollen, and stamens.

The protein localises to the endosome membrane. The enzyme catalyses a 1,2-diacyl-sn-glycero-3-phospho-(1D-myo-inositol-3-phosphate) + ATP = a 1,2-diacyl-sn-glycero-3-phospho-(1D-myo-inositol-3,5-bisphosphate) + ADP + H(+). The PI(3,5)P2 regulatory complex regulates both the synthesis and turnover of phosphatidylinositol 3,5-bisphosphate (PtdIns(3,5)P2). Catalyzes the phosphorylation of phosphatidylinositol 3-phosphate on the fifth hydroxyl of the myo-inositol ring, to form phosphatidylinositol 3,5-bisphosphate. Plays an important role in maintenance of endomembrane homeostasis including endocytosis, vacuole formation, and vacuolar acidification processes. Required for development of viable pollen. Might mediate recycling of auxin transporters. The protein is 1-phosphatidylinositol-3-phosphate 5-kinase FAB1B (FAB1B) of Arabidopsis thaliana (Mouse-ear cress).